The sequence spans 73 residues: Conotoxin ArMKLT2-022 (73 aa).

The N-terminal stretch at 1–22 (MKLTCVLIIAVLFLTACQLTTG) is a signal peptide. Residues 23–40 (EQKDHAQRSADRNSKLTR) constitute a propeptide that is removed on maturation. The residue at position 41 (Gln41) is a Pyrrolidone carboxylic acid. Intrachain disulfides connect Cys42–Cys56, Cys49–Cys60, and Cys55–Cys67.

The protein belongs to the conotoxin O1 superfamily. As to expression, expressed by the venom duct.

It localises to the secreted. The polypeptide is Conotoxin ArMKLT2-022 (Conus arenatus (Sand-dusted cone)).